We begin with the raw amino-acid sequence, 102 residues long: Large ribosomal subunit protein bL21 (102 aa).

It belongs to the bacterial ribosomal protein bL21 family. As to quaternary structure, part of the 50S ribosomal subunit. Contacts protein L20.

Its function is as follows. This protein binds to 23S rRNA in the presence of protein L20. The chain is Large ribosomal subunit protein bL21 from Leifsonia xyli subsp. xyli (strain CTCB07).